Reading from the N-terminus, the 182-residue chain is Bifunctional protein PyrR (182 aa).

A PRPP-binding motif is present at residues 99–111 (IVLVDDVIFTGRT).

This sequence belongs to the purine/pyrimidine phosphoribosyltransferase family. PyrR subfamily. As to quaternary structure, homodimer and homohexamer; in equilibrium.

It catalyses the reaction UMP + diphosphate = 5-phospho-alpha-D-ribose 1-diphosphate + uracil. Its function is as follows. Regulates transcriptional attenuation of the pyrimidine nucleotide (pyr) operon by binding in a uridine-dependent manner to specific sites on pyr mRNA. This disrupts an antiterminator hairpin in the RNA and favors formation of a downstream transcription terminator, leading to a reduced expression of downstream genes. Functionally, also displays a weak uracil phosphoribosyltransferase activity which is not physiologically significant. The polypeptide is Bifunctional protein PyrR (Caldicellulosiruptor saccharolyticus (strain ATCC 43494 / DSM 8903 / Tp8T 6331)).